Here is a 122-residue protein sequence, read N- to C-terminus: UPF0102 protein CLH_1204 (122 aa).

It belongs to the UPF0102 family.

The chain is UPF0102 protein CLH_1204 from Clostridium botulinum (strain Alaska E43 / Type E3).